Consider the following 428-residue polypeptide: 3-phosphoshikimate 1-carboxyvinyltransferase (428 aa).

3-phosphoshikimate is bound by residues Lys20, Ser21, and Arg25. Lys20 is a binding site for phosphoenolpyruvate. Residues Gly93 and Arg122 each contribute to the phosphoenolpyruvate site. 4 residues coordinate 3-phosphoshikimate: Ser167, Gln169, Asp317, and Lys344. Gln169 contributes to the phosphoenolpyruvate binding site. Asp317 serves as the catalytic Proton acceptor. Phosphoenolpyruvate-binding residues include Arg348 and Arg390.

This sequence belongs to the EPSP synthase family. As to quaternary structure, monomer.

The protein resides in the cytoplasm. It catalyses the reaction 3-phosphoshikimate + phosphoenolpyruvate = 5-O-(1-carboxyvinyl)-3-phosphoshikimate + phosphate. Its pathway is metabolic intermediate biosynthesis; chorismate biosynthesis; chorismate from D-erythrose 4-phosphate and phosphoenolpyruvate: step 6/7. In terms of biological role, catalyzes the transfer of the enolpyruvyl moiety of phosphoenolpyruvate (PEP) to the 5-hydroxyl of shikimate-3-phosphate (S3P) to produce enolpyruvyl shikimate-3-phosphate and inorganic phosphate. This Leptospira biflexa serovar Patoc (strain Patoc 1 / ATCC 23582 / Paris) protein is 3-phosphoshikimate 1-carboxyvinyltransferase.